The following is a 158-amino-acid chain: Protein FAM177B (158 aa).

The span at 36–48 shows a compositional bias: acidic residues; sequence EYSTEEEEEEEKE. The disordered stretch occupies residues 36–59; the sequence is EYSTEEEEEEEKEEQSTNSTLDPS.

The protein belongs to the FAM177 family.

In Homo sapiens (Human), this protein is Protein FAM177B (FAM177B).